Reading from the N-terminus, the 95-residue chain is Phospholipase A2 inhibitor gammaCdcPLI (95 aa).

Cystine bridges form between Cys-2–Cys-26, Cys-5–Cys-12, Cys-19–Cys-30, and Cys-61–Cys-77.

In terms of assembly, forms dimers or higher order oligomers in a temperature-dependent manner in vitro. In terms of tissue distribution, expressed by the liver.

It is found in the secreted. Inhibits the enzymatic activity of basic and acidic PLA2 from B.jararacussu and B.pauloensis, respectively, in a dose-dependent manner. Also inhibits myotoxicity and cytotoxicity of BnSp-7 of B.pauloensis. The protein is Phospholipase A2 inhibitor gammaCdcPLI of Crotalus durissus collilineatus (Brazilian rattlesnake).